A 479-amino-acid polypeptide reads, in one-letter code: Sucrose-6-phosphate hydrolase (479 aa).

Substrate is bound by residues 44–47, glutamine 63, 106–107, 166–167, and glutamate 223; these read LLND, YS, and RD. Residue aspartate 47 is part of the active site.

It belongs to the glycosyl hydrolase 32 family.

It localises to the cytoplasm. The enzyme catalyses Hydrolysis of terminal non-reducing beta-D-fructofuranoside residues in beta-D-fructofuranosides.. It participates in glycan biosynthesis; sucrose metabolism. The sequence is that of Sucrose-6-phosphate hydrolase (scrB) from Streptococcus mutans serotype c (strain ATCC 700610 / UA159).